The chain runs to 2098 residues: Unconventional myosin heavy chain 6 (2098 aa).

One can recognise a Myosin motor domain in the interval 62–732 (QGVEDMCQLG…HDLVLEQEYY (671 aa)). 155-162 (GESGAGKT) contacts ATP. Actin-binding stretches follow at residues 609–631 (LEQL…KPNE) and 711–725 (QLGK…KHDL). 3 consecutive IQ domains span residues 735-757 (LKDK…DFEK), 758-787 (QRQA…GFSR), and 804-833 (LRKT…RGEK). Residues 860-898 (FLPSDGKDSGNENDSADSSRRGSYSRLHTSPVMPPANIP) are disordered. The region spanning 929–1168 (HVKKPLKTAL…PSYVELQANK (240 aa)) is the MyTH4 1 domain. Residues 1171 to 1211 (KPVVLAVTFMDGSVKTLCADSATTAAELCKQLAEKVGLTNS) enclose the Ras-associating domain. Residues 1173 to 1481 (VVLAVTFMDG…MFLEGLKKRS (309 aa)) enclose the FERM 1 domain. In terms of domain architecture, SH3 spans 1479–1547 (KRSRYLVAIK…RAENVYVLPT (69 aa)). One can recognise a MyTH4 2 domain in the interval 1624-1772 (FSREHIDQPL…PHLVEVEAIQ (149 aa)). Residues 1778–2086 (IFHKVFFPDN…SYISLLISNQ (309 aa)) enclose the FERM 2 domain.

Belongs to the TRAFAC class myosin-kinesin ATPase superfamily. Myosin family. As to quaternary structure, interacts with unc-98.

It localises to the cytoplasm. In terms of biological role, myosins are actin-based motor molecules with ATPase activity. Unconventional myosins serve in intracellular movements. Their highly divergent tails are presumed to bind to membranous compartments, which would be moved relative to actin filaments. The sequence is that of Unconventional myosin heavy chain 6 from Caenorhabditis elegans.